The sequence spans 201 residues: Glycerol-3-phosphate acyltransferase (201 aa).

6 consecutive transmembrane segments (helical) span residues 10–30, 60–80, 86–106, 116–136, 139–159, and 166–186; these read MLIGALIFGYVLGSIPFGLIL, LAAATLILDALKGTAAALIAA, AAIAAGFGAFIGHLFPVWIGF, LGVLIGLAWAGALVFAAAWIV, LLTRYSSLSALVASLVVPIAL, and ALAALFAIMTVIVFIKHRANI.

Belongs to the PlsY family. Probably interacts with PlsX.

It is found in the cell inner membrane. It catalyses the reaction an acyl phosphate + sn-glycerol 3-phosphate = a 1-acyl-sn-glycero-3-phosphate + phosphate. It participates in lipid metabolism; phospholipid metabolism. In terms of biological role, catalyzes the transfer of an acyl group from acyl-phosphate (acyl-PO(4)) to glycerol-3-phosphate (G3P) to form lysophosphatidic acid (LPA). This enzyme utilizes acyl-phosphate as fatty acyl donor, but not acyl-CoA or acyl-ACP. The sequence is that of Glycerol-3-phosphate acyltransferase from Brucella ovis (strain ATCC 25840 / 63/290 / NCTC 10512).